Reading from the N-terminus, the 349-residue chain is MNKYIKQGAPILGILLAVMFGGREGDATTKTNTTEKTTNPITLKVSYAGSLSVPFEQYEKIYKKYHNNMGVQREAGGSVDCIEKIIYLNDTADVLASADYSLISTMMMPEYADWYLMNARNEIVIAYTDKSNYKDEINSDNWYNILNKPNVKFGFTSPNKDPCGYRSLMTIQLAELHYNIPTIFNDLALKNTNFGVEKENGTNTIIIPKEIKDINTDKIFLRNTESEVLEPLKTGVYDYLFIYKSVADQHNLKYIELPKEINLGYHEYADNYKKVKLTTGDGKTKTAKPIIYGITVPKTAKHQKEGIEFVKTILEHPEVFENAGQPVIEPAVGFGNIPDELKEFVEIRK.

A signal peptide spans 1-25 (MNKYIKQGAPILGILLAVMFGGREG).

This sequence belongs to the bacterial solute-binding protein 1 family. WtpA subfamily.

This is an uncharacterized protein from Methanococcus aeolicus (strain ATCC BAA-1280 / DSM 17508 / OCM 812 / Nankai-3).